Consider the following 503-residue polypeptide: MSEQDITSQPAQDENQIMAERRQKLTEIRTSKGIAFPNDFRRQHLAAPLHAQYDATDKEALEAQPVEVVVAGRMMLKRVMGKASFATVQDSSGRIQFYISRDKVGEDVYADFKTWDMGDILGAKGTLMKTKTGELSVEVSELRLLSKSLRPLPDKFHGLADQEQKYRQRYVDLIINQDSRDTFIKRSKIVQTVREVMVGEDYLEVETPMMHPIPGGAAAKPFVTHHNALDMPLYLRIAPELYLKRLVVGGLERVFEINRNFRNEGMSTRHNPEFTMIEFYEAYCGYERMMEMTEKIIRRCAEAACGTTKVTYNGKEVDLGKPFDRFTIVGAIKHYNPQYTDEQLADEAWLKSEIKALGGKLPPAPGIGSLQLALFEECAEGKLWNPTFIIDYPVEVSPLARGSDADPSITERFELFIVGREHANGYSELNDPEDQAARFRSQVEQKDAGDDEAMHYDADYIRAMEYGLPPTGGCGIGIDRLVMLLTDAPSIRDVILFPHMRPE.

Mg(2+) is bound by residues E414 and E421.

The protein belongs to the class-II aminoacyl-tRNA synthetase family. In terms of assembly, homodimer. Mg(2+) is required as a cofactor.

It localises to the cytoplasm. It carries out the reaction tRNA(Lys) + L-lysine + ATP = L-lysyl-tRNA(Lys) + AMP + diphosphate. The polypeptide is Lysine--tRNA ligase (Laribacter hongkongensis (strain HLHK9)).